The following is a 320-amino-acid chain: o-succinylbenzoate synthase (320 aa).

Lys133 functions as the Proton donor in the catalytic mechanism. Residues Asp161, Glu190, and Asp213 each coordinate Mg(2+). The active-site Proton acceptor is Lys235.

This sequence belongs to the mandelate racemase/muconate lactonizing enzyme family. MenC type 1 subfamily. Requires a divalent metal cation as cofactor.

The catalysed reaction is (1R,6R)-6-hydroxy-2-succinyl-cyclohexa-2,4-diene-1-carboxylate = 2-succinylbenzoate + H2O. The protein operates within quinol/quinone metabolism; 1,4-dihydroxy-2-naphthoate biosynthesis; 1,4-dihydroxy-2-naphthoate from chorismate: step 4/7. It functions in the pathway quinol/quinone metabolism; menaquinone biosynthesis. Its function is as follows. Converts 2-succinyl-6-hydroxy-2,4-cyclohexadiene-1-carboxylate (SHCHC) to 2-succinylbenzoate (OSB). The chain is o-succinylbenzoate synthase from Shigella flexneri.